A 363-amino-acid polypeptide reads, in one-letter code: Glutamate 5-kinase (363 aa).

Lysine 6 serves as a coordination point for ATP. Substrate-binding residues include serine 46, aspartate 133, and asparagine 145. Residues 165–166 (TD) and 207–213 (TGGMHTK) each bind ATP. The PUA domain occupies 271–349 (HGRLLLDGGA…REIEALLGYT (79 aa)).

The protein belongs to the glutamate 5-kinase family.

It is found in the cytoplasm. It catalyses the reaction L-glutamate + ATP = L-glutamyl 5-phosphate + ADP. The protein operates within amino-acid biosynthesis; L-proline biosynthesis; L-glutamate 5-semialdehyde from L-glutamate: step 1/2. In terms of biological role, catalyzes the transfer of a phosphate group to glutamate to form L-glutamate 5-phosphate. In Deinococcus radiodurans (strain ATCC 13939 / DSM 20539 / JCM 16871 / CCUG 27074 / LMG 4051 / NBRC 15346 / NCIMB 9279 / VKM B-1422 / R1), this protein is Glutamate 5-kinase.